Here is a 515-residue protein sequence, read N- to C-terminus: UBP3-associated protein BRE5 (515 aa).

Residues 8 to 140 enclose the NTF2 domain; it reads ICFAFLQNYY…FDITNDIIRF (133 aa). Positions 157-166 are enriched in low complexity; it reads QSNEENSVSA. Disordered stretches follow at residues 157 to 410 and 485 to 515; these read QSNE…PVFS and KTVK…KRKD. The span at 168–201 shows a compositional bias: basic and acidic residues; the sequence is EEDKIRHESGVEKEKEKEKSPEISKPKAKKETVK. Ser-187 carries the phosphoserine modification. Residues 202-213 show a composition bias toward polar residues; sequence DTTAPTESSTQE. Basic and acidic residues-rich tracts occupy residues 262-282 and 299-319; these read LNEK…KEGS and EVSD…EIKP. Ser-282 carries the phosphoserine modification. Over residues 330–341 the composition is skewed to polar residues; the sequence is SGNNASTPSSSP. Residue Thr-336 is modified to Phosphothreonine. Residue Ser-340 is modified to Phosphoserine. Residues 374-396 are compositionally biased toward basic and acidic residues; that stretch reads IRPETLPKKPTERKFEMGNRRDN. Ser-398 bears the Phosphoserine mark. One can recognise an RRM domain in the interval 418 to 494; sequence YPIYIRGTNG…KTVKKPTSNN (77 aa). Over residues 489–503 the composition is skewed to polar residues; the sequence is KPTSNNPPGIFTNGT. Positions 504–515 are enriched in basic residues; that stretch reads RSHRKQPLKRKD.

As to quaternary structure, heterotetramer with UBP3; contains two molecules of BRE5 and two molecules of UBP3. Forms a complex composed of CDC48, DOA1, deubiquitinase UBP3 and probably BRE5. Within the complex, interacts (via C-terminus) with CDC48; the interaction is direct and UBP3-independent.

Its function is as follows. Has a role in de-ubiquitination. In conjunction with UBP3, cleaves ubiquitin, leading to the subsequent mono-ubiquitination of sec23. The chain is UBP3-associated protein BRE5 (BRE5) from Saccharomyces cerevisiae (strain ATCC 204508 / S288c) (Baker's yeast).